Here is a 168-residue protein sequence, read N- to C-terminus: Putative flavin-containing monooxygenase FMO GS-OX-like 11 (168 aa).

G17–G22 provides a ligand contact to FAD.

It belongs to the FMO family. It depends on FAD as a cofactor.

Functionally, catalyzes the conversion of methylthioalkyl glucosinolates of any chain length into methylsulfinylalkyl glucosinolates. This is Putative flavin-containing monooxygenase FMO GS-OX-like 11 from Arabidopsis thaliana (Mouse-ear cress).